A 74-amino-acid polypeptide reads, in one-letter code: MKIYDAVVKTTFQISTSIFFDYIYFFDYKGMKMAEIFAVNNYTELKKIRRMITFGFTVLGLGIGMIFGDAGLDV.

The helical transmembrane segment at 52–72 (ITFGFTVLGLGIGMIFGDAGL) threads the bilayer.

It is found in the membrane. This is an uncharacterized protein from Methanocaldococcus jannaschii (strain ATCC 43067 / DSM 2661 / JAL-1 / JCM 10045 / NBRC 100440) (Methanococcus jannaschii).